We begin with the raw amino-acid sequence, 624 residues long: Phosphoenolpyruvate carboxykinase [GTP] (624 aa).

Residues arginine 88 and 222 to 224 (YGG) contribute to the substrate site. 2 residues coordinate Mn(2+): lysine 231 and histidine 250. A substrate-binding site is contributed by serine 272. 273–278 (MCGKTS) is a binding site for GTP. Cysteine 274 is a catalytic residue. Aspartate 291 is a Mn(2+) binding site. Residue 386–388 (NAR) coordinates substrate. 2 residues coordinate GTP: arginine 388 and arginine 420.

The protein belongs to the phosphoenolpyruvate carboxykinase [GTP] family. The cofactor is Mn(2+).

It is found in the cytoplasm. It catalyses the reaction oxaloacetate + GTP = phosphoenolpyruvate + GDP + CO2. It functions in the pathway carbohydrate biosynthesis; gluconeogenesis. Functionally, catalyzes the conversion of oxaloacetate (OAA) to phosphoenolpyruvate (PEP), the rate-limiting step in the metabolic pathway that produces glucose from lactate and other precursors derived from the citric acid cycle. The sequence is that of Phosphoenolpyruvate carboxykinase [GTP] from Pyrococcus furiosus (strain ATCC 43587 / DSM 3638 / JCM 8422 / Vc1).